A 122-amino-acid chain; its full sequence is NLFQFGDMILQKTGKEAVHSYAIYGCYCGWGGQGRAQDATDRCCFAQDCCYGRVNDCNPKTATYTYSFENGDIVCGDNDLCLRAVCECDRAAAICLGENVNTYDKNYEYYSISHCTEESEQC.

Disulfide bonds link C26–C115, C28–C44, C43–C95, C49–C122, C50–C88, C57–C81, and C75–C86.

The protein belongs to the phospholipase A2 family. Group II subfamily. D49 sub-subfamily. Heterodimer of A and B (AC P14420) chains; non-covalently linked. The A chain (acidic) is non-toxic, and increases the toxicity of the B chain (basic). The A chain may act as factor stabilizing the complex structure and hence retaining its toxicity by preventing non-specific binding. Upon binding to the target membranes the A chain may dissociate. Expressed by the venom gland.

It is found in the secreted. In terms of biological role, heterodimer: postsynaptic neurotoxin. Functionally, monomer: Acidic phospholipase A2 homolog that is non-toxic. The chain is Acidic phospholipase A2 homolog vipoxin A chain from Vipera ammodytes meridionalis (Eastern sand viper).